We begin with the raw amino-acid sequence, 396 residues long: Elongation factor Tu (396 aa).

The tr-type G domain occupies 10-206; that stretch reads KPHVNVGTIG…ALDSYIPTPK (197 aa). The tract at residues 19 to 26 is G1; sequence GHVDHGKT. 19 to 26 lines the GTP pocket; sequence GHVDHGKT. Threonine 26 is a binding site for Mg(2+). Residues 60 to 64 form a G2 region; that stretch reads GITIS. Residues 81–84 are G3; the sequence is DCPG. GTP is bound by residues 81 to 85 and 136 to 139; these read DCPGH and NKAD. Residues 136-139 are G4; that stretch reads NKAD. Residues 174 to 176 are G5; the sequence is SAL.

Belongs to the TRAFAC class translation factor GTPase superfamily. Classic translation factor GTPase family. EF-Tu/EF-1A subfamily. In terms of assembly, monomer.

Its subcellular location is the cytoplasm. The enzyme catalyses GTP + H2O = GDP + phosphate + H(+). Functionally, GTP hydrolase that promotes the GTP-dependent binding of aminoacyl-tRNA to the A-site of ribosomes during protein biosynthesis. In Vesicomyosocius okutanii subsp. Calyptogena okutanii (strain HA), this protein is Elongation factor Tu.